We begin with the raw amino-acid sequence, 77 residues long: Dermatoxin-DA1 (77 aa).

Residues 1 to 22 (MAFLKKSLFLVLFLGLVPLFLC) form the signal peptide. A propeptide spanning residues 23 to 42 (ENEKREGENEKEENDDQSEE) is cleaved from the precursor. At Lys76 the chain carries Lysine amide.

This sequence belongs to the frog skin active peptide (FSAP) family. Dermatoxin subfamily. In terms of tissue distribution, expressed by the skin glands.

The protein localises to the secreted. Functionally, possesses a potent antimicrobial activity against Gram-positive and Gram-negative bacteria. Probably acts by disturbing membrane functions with its amphipathic structure. This is Dermatoxin-DA1 from Agalychnis dacnicolor (Giant Mexican leaf frog).